The following is a 409-amino-acid chain: MKTFRDFKKKIKNNNNNKNNKNNNINNNNSNNNKNNKNNNNNNSNNIYTPSISIIDNYDTLCSTPQNLKSNLKKNLNINNQEFITSNILEIDWNTIIDIEIIDFGNSIVCLLVTLSSDNLHFNQILIKSTPTIAQECYASVLQNILKLPILDLRLLEKNNEFLEMSSNLLDFSKDDQFLNDFIKSEFEKTFFLIMEFRQNGKKFNELNHKEYFSGYKGQEKFKQLGKIIAFDIFCNNFCKTNIAGDDSSIYFSNIICYETPNKNGWYFSLINSNISCLNNSLFTIGYRYHMNSLKLLLFSIFQNPSTESFQIRMMREHLLKKLNIKLPKSSAVYIQKGIAKGIKSIVNYINYPLLENTKDKVKNIVSCDNYNIWKKGIDSIHCPFLLDVLNEIEIEISNRREKVYFVKI.

The tract at residues 1–45 is disordered; the sequence is MKTFRDFKKKIKNNNNNKNNKNNNINNNNSNNNKNNKNNNNNNSN. Residues 5 to 46 adopt a coiled-coil conformation; the sequence is RDFKKKIKNNNNNKNNKNNNINNNNSNNNKNNKNNNNNNSNN. Low complexity predominate over residues 13–45; it reads NNNNNKNNKNNNINNNNSNNNKNNKNNNNNNSN.

This sequence belongs to the protein kinase superfamily. AFK Ser/Thr protein kinase family.

This Dictyostelium discoideum (Social amoeba) protein is Putative actin-fragmin kinase DDB_G0268812.